The sequence spans 935 residues: uncharacterized protein (935 aa).

Disordered regions lie at residues 1–32 (MDIG…QNNN), 74–228 (NNNN…YNNG), 265–287 (NNEN…NNNN), 342–376 (NQQK…SSKT), 394–414 (SPTQ…QQQY), 466–491 (KNIN…NNNI), 516–559 (PHQQ…TSTI), 727–755 (SPSS…ISPS), and 778–799 (GGGS…NVQN). The segment covering 74 to 227 (NNNNNTTNNN…NNNDDNIYNN (154 aa)) has biased composition (low complexity). Residues 262 to 331 (KKNNNENKKK…NNINNNNNKI (70 aa)) are a coiled coil. Residues 265-274 (NNENKKKNND) show a composition bias toward basic and acidic residues. A compositionally biased stretch (low complexity) spans 275 to 287 (NENNNYPNFNNNN). Over residues 367-376 (LSHNSESSKT) the composition is skewed to polar residues. Low complexity predominate over residues 397–414 (QQQQQQQQQQQQQQQQQY). Residues 522 to 559 (SSPTSSSTSTSSTTSSSSSSSSSSSSSSSSSTSSTSTI) are compositionally biased toward low complexity. A compositionally biased stretch (gly residues) spans 778-791 (GGGSSGGGGSGGGV).

This is an uncharacterized protein from Dictyostelium discoideum (Social amoeba).